We begin with the raw amino-acid sequence, 61 residues long: Small ribosomal subunit protein uS14 (61 aa).

The Zn(2+) site is built by Cys-24, Cys-27, Cys-40, and Cys-43.

This sequence belongs to the universal ribosomal protein uS14 family. Zinc-binding uS14 subfamily. As to quaternary structure, part of the 30S ribosomal subunit. Contacts proteins S3 and S10. Requires Zn(2+) as cofactor.

In terms of biological role, binds 16S rRNA, required for the assembly of 30S particles and may also be responsible for determining the conformation of the 16S rRNA at the A site. This is Small ribosomal subunit protein uS14 from Carboxydothermus hydrogenoformans (strain ATCC BAA-161 / DSM 6008 / Z-2901).